A 184-amino-acid polypeptide reads, in one-letter code: Peptidoglycan-recognition protein SC2 (184 aa).

The first 20 residues, 1–20 (MANKALILLAVLFCAQAVLG), serve as a signal peptide directing secretion. In terms of domain architecture, N-acetylmuramoyl-L-alanine amidase spans 45–169 (SYAVIHHTAG…RQVGSTECPG (125 aa)). A Zn(2+)-binding site is contributed by H50. A disulfide bridge links C57 with C63. Zn(2+)-binding residues include H159 and C167.

This sequence belongs to the N-acetylmuramoyl-L-alanine amidase 2 family. It depends on Zn(2+) as a cofactor. As to expression, constitutively expressed at high level in gut, in addition to the induced expression in fat body.

The protein resides in the secreted. The catalysed reaction is Hydrolyzes the link between N-acetylmuramoyl residues and L-amino acid residues in certain cell-wall glycopeptides.. Its function is as follows. N-acetylmuramyl-L-alanine amidase involved in innate immunity by degrading bacterial peptidoglycans (PGN). Probably plays a scavenger role by digesting biologically active PGN into biologically inactive fragments. Has no direct bacteriolytic activity. The protein is Peptidoglycan-recognition protein SC2 (PGRP-SC2) of Drosophila melanogaster (Fruit fly).